The sequence spans 400 residues: Plasminogen activator inhibitor 1 (400 aa).

The signal sequence occupies residues 1 to 21 (MQMSTVCLALGLALVFGEASA). N-linked (GlcNAc...) asparagine glycans are attached at residues N230, N286, and N350.

Belongs to the serpin family. Forms a heterodimer with TMPRSS7. Interacts with VTN. Binds LRP1B; binding is followed by internalization and degradation. Interacts with PPP1CB. In complex with PLAU/uPA, interacts with PLAUR/uPAR. Interacts with SORL1 and LRP1, either alone or in complex with PLAU; these interactions are abolished in the presence of LRPAP1/RAP. The ternary complex composed of PLAUR-PLAU-PAI1 also interacts with SORL1. Interacts with PLAT/tPA. Also interacts with SORL1, when complexed to PLAT/tPA.

Its subcellular location is the secreted. Its function is as follows. Serine protease inhibitor. Inhibits TMPRSS7. Is a primary inhibitor of tissue-type plasminogen activator (PLAT) and urokinase-type plasminogen activator (PLAU). As PLAT inhibitor, it is required for fibrinolysis down-regulation and is responsible for the controlled degradation of blood clots. As PLAU inhibitor, it is involved in the regulation of cell adhesion and spreading. Acts as a regulator of cell migration, independently of its role as protease inhibitor. It is required for stimulation of keratinocyte migration during cutaneous injury repair. It is involved in cellular and replicative senescence. Plays a role in alveolar type 2 cells senescence in the lung. Is involved in the regulation of cementogenic differentiation of periodontal ligament stem cells, and regulates odontoblast differentiation and dentin formation during odontogenesis. This Neovison vison (American mink) protein is Plasminogen activator inhibitor 1 (SERPINE1).